The sequence spans 366 residues: Carbamoyl phosphate synthase small chain (366 aa).

A CPSase region spans residues 1-168 (MYGILVLEDG…KETVIYNAED (168 aa)). S45, G220, and G222 together coordinate L-glutamine. A Glutamine amidotransferase type-1 domain is found at 172-363 (RCVLIDCGVK…VELGIKFKAE (192 aa)). The active-site Nucleophile is C247. The L-glutamine site is built by L248, Q251, N289, G291, and F292. Residues H336 and E338 contribute to the active site.

Belongs to the CarA family. Composed of two chains; the small (or glutamine) chain promotes the hydrolysis of glutamine to ammonia, which is used by the large (or ammonia) chain to synthesize carbamoyl phosphate. Tetramer of heterodimers (alpha,beta)4.

It carries out the reaction hydrogencarbonate + L-glutamine + 2 ATP + H2O = carbamoyl phosphate + L-glutamate + 2 ADP + phosphate + 2 H(+). It catalyses the reaction L-glutamine + H2O = L-glutamate + NH4(+). Its pathway is amino-acid biosynthesis; L-arginine biosynthesis; carbamoyl phosphate from bicarbonate: step 1/1. The protein operates within pyrimidine metabolism; UMP biosynthesis via de novo pathway; (S)-dihydroorotate from bicarbonate: step 1/3. Its function is as follows. Small subunit of the glutamine-dependent carbamoyl phosphate synthetase (CPSase). CPSase catalyzes the formation of carbamoyl phosphate from the ammonia moiety of glutamine, carbonate, and phosphate donated by ATP, constituting the first step of 2 biosynthetic pathways, one leading to arginine and/or urea and the other to pyrimidine nucleotides. The small subunit (glutamine amidotransferase) binds and cleaves glutamine to supply the large subunit with the substrate ammonia. The polypeptide is Carbamoyl phosphate synthase small chain (Methanococcus maripaludis (strain C5 / ATCC BAA-1333)).